The chain runs to 277 residues: Phosphoribosylaminoimidazole-succinocarboxamide synthase (277 aa).

Belongs to the SAICAR synthetase family.

It catalyses the reaction 5-amino-1-(5-phospho-D-ribosyl)imidazole-4-carboxylate + L-aspartate + ATP = (2S)-2-[5-amino-1-(5-phospho-beta-D-ribosyl)imidazole-4-carboxamido]succinate + ADP + phosphate + 2 H(+). It functions in the pathway purine metabolism; IMP biosynthesis via de novo pathway; 5-amino-1-(5-phospho-D-ribosyl)imidazole-4-carboxamide from 5-amino-1-(5-phospho-D-ribosyl)imidazole-4-carboxylate: step 1/2. The chain is Phosphoribosylaminoimidazole-succinocarboxamide synthase from Salinispora tropica (strain ATCC BAA-916 / DSM 44818 / JCM 13857 / NBRC 105044 / CNB-440).